Here is a 182-residue protein sequence, read N- to C-terminus: Ribosomal RNA small subunit methyltransferase G (182 aa).

S-adenosyl-L-methionine is bound by residues Gly58, Phe63, 109–110 (IE), and Arg123.

The protein belongs to the methyltransferase superfamily. RNA methyltransferase RsmG family.

It is found in the cytoplasm. It catalyses the reaction guanosine(527) in 16S rRNA + S-adenosyl-L-methionine = N(7)-methylguanosine(527) in 16S rRNA + S-adenosyl-L-homocysteine. Its function is as follows. Specifically methylates the N7 position of guanine in position 527 of 16S rRNA. In Campylobacter fetus subsp. fetus (strain 82-40), this protein is Ribosomal RNA small subunit methyltransferase G.